We begin with the raw amino-acid sequence, 154 residues long: Myoglobin (154 aa).

Residues 2–148 enclose the Globin domain; that stretch reads GLSDGEWHLV…FRNDIAAKYK (147 aa). At S4 the chain carries Phosphoserine. Residue H65 coordinates nitrite. Residue H65 coordinates O2. T68 bears the Phosphothreonine mark. Residue H94 coordinates heme b.

It belongs to the globin family. Monomeric.

It localises to the cytoplasm. The protein localises to the sarcoplasm. The enzyme catalyses Fe(III)-heme b-[protein] + nitric oxide + H2O = Fe(II)-heme b-[protein] + nitrite + 2 H(+). The catalysed reaction is H2O2 + AH2 = A + 2 H2O. In terms of biological role, monomeric heme protein which primary function is to store oxygen and facilitate its diffusion within muscle tissues. Reversibly binds oxygen through a pentacoordinated heme iron and enables its timely and efficient release as needed during periods of heightened demand. Depending on the oxidative conditions of tissues and cells, and in addition to its ability to bind oxygen, it also has a nitrite reductase activity whereby it regulates the production of bioactive nitric oxide. Under stress conditions, like hypoxia and anoxia, it also protects cells against reactive oxygen species thanks to its pseudoperoxidase activity. This chain is Myoglobin (MB), found in Halichoerus grypus (Gray seal).